The sequence spans 354 residues: Guanine nucleotide-binding protein G(i) subunit alpha-3 (354 aa).

Glycine 2 carries the N-myristoyl glycine lipid modification. Cysteine 3 is lipidated: S-palmitoyl cysteine. The 323-residue stretch at 32-354 folds into the G-alpha domain; it reads KEVKLLLLGA…KNNLKECGLY (323 aa). Positions 35-48 are G1 motif; that stretch reads KLLLLGAGESGKST. Glycine 42, glutamate 43, serine 44, glycine 45, lysine 46, serine 47, threonine 48, aspartate 150, serine 151, leucine 175, arginine 176, threonine 177, arginine 178, valine 179, lysine 180, threonine 181, valine 201, glycine 203, asparagine 269, lysine 270, aspartate 272, leucine 273, cysteine 325, alanine 326, and threonine 327 together coordinate GTP. Serine 47 is a Mg(2+) binding site. Positions 173 to 181 are G2 motif; that stretch reads DVLRTRVKT. Threonine 181 provides a ligand contact to Mg(2+). The tract at residues 196 to 205 is G3 motif; sequence FKMFDVGGQR. Residues 265–272 are G4 motif; that stretch reads ILFLNKKD. The tract at residues 324 to 329 is G5 motif; it reads TCATDT.

This sequence belongs to the G-alpha family. G(i/o/t/z) subfamily. Heterotrimeric G proteins are composed of 3 units; alpha, beta and gamma. The alpha subunit contains the guanine nucleotide binding site. GTP binding causes dissociation of the heterotrimer, liberating the individual subunits so that they can interact with downstream effector proteins. Forms a complex with CCDC88A/GIV and EGFR which leads to enhanced EGFR signaling and triggering of cell migration; ligand stimulation is required for recruitment of GNAI3 to the complex. Interacts (inactive GDP-bound form) with CCDC88A/GIV (via GBA motif); the interaction leads to activation of GNAI3. Interacts (inactive GDP-bound form) with CCDC88C/DAPLE (via GBA motif); the interaction leads to activation of GNAI3. Interacts (inactive GDP-bound form) with NUCB1 (via GBA motif) and NUCB2 (via GBA motif); the interaction leads to activation of GNAI3. Interacts (inactive GDP-bound form) with PLCD4 (via GBA motif); the interaction leads to activation of GNAI3. Interacts with INSR; the interaction is probably mediated by CCDC88A/GIV. Interacts with GPSM1. Interacts (GDP-bound form) with GPSM2 (via GoLoco domains). Does not interact with RGS2. Interacts with RGS8 and RGS10; this strongly enhances the intrinsic GTPase activity. Interacts with RGS16; this strongly enhances the intrinsic GTPase activity. Interacts with RGS12. Interacts (via active GTP- or inactive GDP-bound form) with RGS14. Interacts (via active GTP-bound form) with TRPC5 (via ANK repeats) in a homotetrameric ion channel; the interaction is direct and activates the channel activity.

The protein resides in the cytoplasm. Its subcellular location is the cell membrane. It is found in the cytoskeleton. The protein localises to the microtubule organizing center. It localises to the centrosome. Heterotrimeric guanine nucleotide-binding proteins (G proteins) function as transducers downstream of G protein-coupled receptors (GPCRs) in numerous signaling cascades. The alpha chain contains the guanine nucleotide binding site and alternates between an active, GTP-bound state and an inactive, GDP-bound state. Signaling by an activated GPCR promotes GDP release and GTP binding. The alpha subunit has a low GTPase activity that converts bound GTP to GDP, thereby terminating the signal. Both GDP release and GTP hydrolysis are modulated by numerous regulatory proteins. Signaling is mediated via effector proteins, such as adenylate cyclase. Inhibits adenylate cyclase activity, leading to decreased intracellular cAMP levels. Stimulates the activity of receptor-regulated K(+) channels. The active GTP-bound form prevents the association of RGS14 with centrosomes and is required for the translocation of RGS14 from the cytoplasm to the plasma membrane. May play a role in cell division. The active GTP-bound form activates the calcium permeant TRPC5 ion channels. The polypeptide is Guanine nucleotide-binding protein G(i) subunit alpha-3 (GNAI3) (Cricetulus griseus (Chinese hamster)).